The primary structure comprises 214 residues: MRIILLGAPGAGKGTQAQYLMGKYGIPQISTGDMLRAAIKAGTELGNAAKRVMDEGKLVSDELIIGLVKERIAQDDCKGGFLLDGFPRTIPQADAMKEAGINVDHVIEFDVPDEVIVERMAGRRVHPASGRVYHLQYNPPQNDGKDDETGEDLVIRADDQEDTVRHRLGVYHEQTKPLVDYYQSEASANNCQYHKIDGTKAVDVVSDQLSSLLG.

ATP is bound at residue 10 to 15 (GAGKGT). An NMP region spans residues 30–59 (STGDMLRAAIKAGTELGNAAKRVMDEGKLV). Residues T31, R36, 57–59 (KLV), 85–88 (GFPR), and Q92 contribute to the AMP site. The LID stretch occupies residues 122–159 (GRRVHPASGRVYHLQYNPPQNDGKDDETGEDLVIRADD). Residues R123 and 132-133 (VY) each bind ATP. R156 and R167 together coordinate AMP. K200 provides a ligand contact to ATP.

This sequence belongs to the adenylate kinase family. In terms of assembly, monomer.

Its subcellular location is the cytoplasm. It carries out the reaction AMP + ATP = 2 ADP. The protein operates within purine metabolism; AMP biosynthesis via salvage pathway; AMP from ADP: step 1/1. Its function is as follows. Catalyzes the reversible transfer of the terminal phosphate group between ATP and AMP. Plays an important role in cellular energy homeostasis and in adenine nucleotide metabolism. The chain is Adenylate kinase from Pseudoalteromonas atlantica (strain T6c / ATCC BAA-1087).